The primary structure comprises 509 residues: Probable glycine dehydrogenase (decarboxylating) subunit 2 (509 aa).

Lys278 is subject to N6-(pyridoxal phosphate)lysine.

This sequence belongs to the GcvP family. C-terminal subunit subfamily. The glycine cleavage system is composed of four proteins: P, T, L and H. In this organism, the P 'protein' is a heterodimer of two subunits. Pyridoxal 5'-phosphate serves as cofactor.

It carries out the reaction N(6)-[(R)-lipoyl]-L-lysyl-[glycine-cleavage complex H protein] + glycine + H(+) = N(6)-[(R)-S(8)-aminomethyldihydrolipoyl]-L-lysyl-[glycine-cleavage complex H protein] + CO2. In terms of biological role, the glycine cleavage system catalyzes the degradation of glycine. The P protein binds the alpha-amino group of glycine through its pyridoxal phosphate cofactor; CO(2) is released and the remaining methylamine moiety is then transferred to the lipoamide cofactor of the H protein. The protein is Probable glycine dehydrogenase (decarboxylating) subunit 2 of Saccharolobus islandicus (strain Y.N.15.51 / Yellowstone #2) (Sulfolobus islandicus).